The chain runs to 775 residues: Melanoma-associated antigen D1 (775 aa).

The disordered stretch occupies residues 37–330 (SEAPPTSQAT…PARQTPSAWQ (294 aa)). Low complexity predominate over residues 39-50 (APPTSQATAAAS). Polar residues-rich tracts occupy residues 52-63 (PNASPQSSQPPT), 84-100 (KAQN…SQAR), 107-120 (KNQS…QNGT), 149-178 (GQNS…NQPK), 221-235 (AQTS…NVES), 247-258 (VNNLNVEENNSG), and 296-308 (LAWQ…QNQT). Repeat copies occupy residues 292-297 (WQTPLA), 298-303 (WQNPSG), 304-309 (WQNQTA), 329-334 (WQNPVA), 335-340 (WQNPVI), 341-346 (WPNPVI), 347-352 (WQNPVI), 353-358 (WPNPIV), 359-364 (WPGPIV), 365-370 (WPNPMA), 371-376 (WQSTPG), 377-382 (WQSPPS), 383-388 (WQAPPS), 389-394 (WQSPQD), 395-400 (WQGPPD), 401-406 (WQVPPD), 407-412 (WSMPPD), 413-418 (WSFPSD), and 419-424 (WPFPPD). The tract at residues 292-441 (WQTPLAWQNP…IPPDWQNLRP (150 aa)) is 22 X 6 AA tandem repeats of W-[PQ]-X-P-X-X. Residues 309-326 (ARQTPPAARQSPPARQTP) are compositionally biased toward low complexity. The interval 374 to 409 (TPGWQSPPSWQAPPSWQSPQDWQGPPDWQVPPDWSM) is disordered. Residues 375 to 406 (PGWQSPPSWQAPPSWQSPQDWQGPPDWQVPPD) show a composition bias toward low complexity. A 20; approximate repeat occupies 425 to 429 (WIPAD). Tandem repeats lie at residues 430–435 (WPIPPD) and 436–441 (WQNLRP). Residues 437-452 (QNLRPSPNLRSSSNSR) show a composition bias toward low complexity. The tract at residues 437–463 (QNLRPSPNLRSSSNSRASQNQGPPQPR) is disordered. In terms of domain architecture, MAGE spans 468 to 666 (LQERANKLVK…RDWTAQFMEA (199 aa)).

Interacts with DLX5, DLX7 and MSX2 and forms homomultimers. Interacts with UNC5A. Interacts with TRIM28 and PJA1. Interacts with NGFR/p75NTR and RORA. In terms of tissue distribution, ubiquitously expressed in many adult tissues, except for the spleen. Expressed in osteoblastic and chondrogenic cell lines and also during embryonic development.

It localises to the nucleus. The protein resides in the cytoplasm. The protein localises to the cell membrane. Its function is as follows. Involved in the apoptotic response after nerve growth factor (NGF) binding in neuronal cells. Inhibits cell cycle progression, and facilitates NGFR-mediated apoptosis. May act as a regulator of the function of DLX family members. May enhance ubiquitin ligase activity of RING-type zinc finger-containing E3 ubiquitin-protein ligases. Proposed to act through recruitment and/or stabilization of the Ubl-conjugating enzyme (E2) at the E3:substrate complex. Plays a role in the circadian rhythm regulation. May act as RORA coregulator, modulating the expression of core clock genes such as BMAL1 and NFIL3, induced, or NR1D1, repressed. The polypeptide is Melanoma-associated antigen D1 (Maged1) (Mus musculus (Mouse)).